Here is a 421-residue protein sequence, read N- to C-terminus: UDP-N-acetylglucosamine 1-carboxyvinyltransferase (421 aa).

Residue K22–N23 coordinates phosphoenolpyruvate. R92 is a binding site for UDP-N-acetyl-alpha-D-glucosamine. C116 acts as the Proton donor in catalysis. C116 is modified (2-(S-cysteinyl)pyruvic acid O-phosphothioketal). UDP-N-acetyl-alpha-D-glucosamine contacts are provided by D307 and V329.

Belongs to the EPSP synthase family. MurA subfamily.

The protein localises to the cytoplasm. The enzyme catalyses phosphoenolpyruvate + UDP-N-acetyl-alpha-D-glucosamine = UDP-N-acetyl-3-O-(1-carboxyvinyl)-alpha-D-glucosamine + phosphate. Its pathway is cell wall biogenesis; peptidoglycan biosynthesis. In terms of biological role, cell wall formation. Adds enolpyruvyl to UDP-N-acetylglucosamine. The sequence is that of UDP-N-acetylglucosamine 1-carboxyvinyltransferase from Kosmotoga olearia (strain ATCC BAA-1733 / DSM 21960 / TBF 19.5.1).